The chain runs to 217 residues: Cytidylate kinase (217 aa).

11–19 (GPAGAGKST) contacts ATP.

This sequence belongs to the cytidylate kinase family. Type 1 subfamily.

The protein resides in the cytoplasm. It catalyses the reaction CMP + ATP = CDP + ADP. The enzyme catalyses dCMP + ATP = dCDP + ADP. The protein is Cytidylate kinase of Clostridium perfringens (strain SM101 / Type A).